Consider the following 71-residue polypeptide: ATP synthase F(0) complex subunit e, mitochondrial (71 aa).

Lysine 34 is modified (N6-acetyllysine). Serine 68 bears the Phosphoserine mark.

The protein belongs to the ATPase e subunit family. Component of the ATP synthase complex composed at least of ATP5F1A/subunit alpha, ATP5F1B/subunit beta, ATP5MC1/subunit c (homooctomer), MT-ATP6/subunit a, MT-ATP8/subunit 8, ATP5ME/subunit e, ATP5MF/subunit f, ATP5MG/subunit g, ATP5MK/subunit k, ATP5MJ/subunit j, ATP5F1C/subunit gamma, ATP5F1D/subunit delta, ATP5F1E/subunit epsilon, ATP5PF/subunit F6, ATP5PB/subunit b, ATP5PD/subunit d, ATP5PO/subunit OSCP. ATP synthase complex consists of a soluble F(1) head domain (subunits alpha(3) and beta(3)) - the catalytic core - and a membrane F(0) domain - the membrane proton channel (subunits c, a, 8, e, f, g, k and j). These two domains are linked by a central stalk (subunits gamma, delta, and epsilon) rotating inside the F1 region and a stationary peripheral stalk (subunits F6, b, d, and OSCP).

It localises to the mitochondrion. The protein resides in the mitochondrion inner membrane. In terms of biological role, subunit e, of the mitochondrial membrane ATP synthase complex (F(1)F(0) ATP synthase or Complex V) that produces ATP from ADP in the presence of a proton gradient across the membrane which is generated by electron transport complexes of the respiratory chain. ATP synthase complex consist of a soluble F(1) head domain - the catalytic core - and a membrane F(1) domain - the membrane proton channel. These two domains are linked by a central stalk rotating inside the F(1) region and a stationary peripheral stalk. During catalysis, ATP synthesis in the catalytic domain of F(1) is coupled via a rotary mechanism of the central stalk subunits to proton translocation. In vivo, can only synthesize ATP although its ATP hydrolase activity can be activated artificially in vitro. Part of the complex F(0) domain. The protein is ATP synthase F(0) complex subunit e, mitochondrial of Sus scrofa (Pig).